The chain runs to 535 residues: Importin subunit alpha-2 (535 aa).

The region spanning 1 to 58 is the IBB domain; it reads MSLRPNAKTEVRRNRYKVAVDAEEGRRRREDNMVEIRKSKREESLQKKRREGLQANQL. The segment covering 20–46 has biased composition (basic and acidic residues); the sequence is VDAEEGRRRREDNMVEIRKSKREESLQ. The disordered stretch occupies residues 20-67; it reads VDAEEGRRRREDNMVEIRKSKREESLQKKRREGLQANQLPQFAPSPVP. ARM repeat units lie at residues 67-106, 110-150, 153-192, 195-235, 237-276, 279-318, 321-361, 364-403, 407-446, and 461-500; these read PASS…KLLS, SPPI…NIAS, SENT…NVAG, PRCR…NFCR, KPQP…YLSD, NDKI…NIVT, DLQT…NITA, RDQI…NATS, PDQI…NILK, and NFYA…TYWL.

This sequence belongs to the importin alpha family. Forms a complex with the importin subunit beta-1 KPNB1. Interacts with A.tumefaciens VirD2 and VirE2. Binds to SWO1.

The protein localises to the nucleus envelope. Functionally, binds to conventional NLS motifs and mediates nuclear protein import across the nuclear envelope. Involved in the maintenance of cell wall integrity under salt stress via interaction with SWO1. Acts as a cellular receptor for the nuclear import of the virD2 protein of Agrobacterium, but is not essential for Agrobacterium-mediated root transformation. In Arabidopsis thaliana (Mouse-ear cress), this protein is Importin subunit alpha-2.